The sequence spans 1369 residues: DNA-directed RNA polymerase subunit beta' (1369 aa).

The interval Met1–Arg43 is disordered. The segment covering Lys7–Lys24 has biased composition (basic residues). Positions 253, 320, 327, and 330 each coordinate Zn(2+). Positions Thr1294 to Glu1369 are disordered. Over residues Asp1342–Met1351 the composition is skewed to acidic residues. Over residues Leu1357–Glu1369 the composition is skewed to low complexity.

This sequence belongs to the RNA polymerase beta' chain family. RpoC2 subfamily. As to quaternary structure, in cyanobacteria the RNAP catalytic core is composed of 2 alpha, 1 beta, 1 beta', 1 gamma and 1 omega subunit. When a sigma factor is associated with the core the holoenzyme is formed, which can initiate transcription. Zn(2+) serves as cofactor.

The enzyme catalyses RNA(n) + a ribonucleoside 5'-triphosphate = RNA(n+1) + diphosphate. DNA-dependent RNA polymerase catalyzes the transcription of DNA into RNA using the four ribonucleoside triphosphates as substrates. This is DNA-directed RNA polymerase subunit beta' from Prochlorococcus marinus (strain NATL1A).